The following is a 597-amino-acid chain: TOX high mobility group box family member 4 (597 aa).

Disordered stretches follow at residues 160-224 (GAIL…EPQK) and 520-546 (VQEESPPPQMDVELVSSSPPPSLSPQP). The segment covering 207–217 (KPKTPKKKKKK) has biased composition (basic residues). The short motif at 212–217 (KKKKKK) is the Nuclear localization signal element. Positions 222 to 290 (PQKPLSAYAL…EYLKALALYK (69 aa)) form a DNA-binding region, HMG box.

In terms of assembly, component of the PNUTS-PP1 phosphatase complex.

The protein resides in the nucleus. It localises to the chromosome. In terms of biological role, transcription factor that modulates cell fate reprogramming from the somatic state to the pluripotent and neuronal fate. Also acts as a regulatory component of protein phosphatase 1 (PP1) complexes. Component of the PNUTS-PP1 protein phosphatase complex, a PP1 complex that regulates RNA polymerase II transcription pause-release. PNUTS-PP1 also plays a role in the control of chromatin structure and cell cycle progression during the transition from mitosis into interphase. In Xenopus tropicalis (Western clawed frog), this protein is TOX high mobility group box family member 4 (tox4).